Consider the following 585-residue polypeptide: tRNA-guanine(15) transglycosylase (585 aa).

The active-site Nucleophile is Asp-95. Substrate is bound by residues Asp-130 and Ala-196. Zn(2+)-binding residues include Cys-279, Cys-281, and Cys-284. Positions 507–582 (VMRVVVNKEA…RAVKTRRGVE (76 aa)) constitute a PUA domain.

It belongs to the archaeosine tRNA-ribosyltransferase family. Zn(2+) serves as cofactor.

It carries out the reaction guanosine(15) in tRNA + 7-cyano-7-deazaguanine = 7-cyano-7-carbaguanosine(15) in tRNA + guanine. Its pathway is tRNA modification; archaeosine-tRNA biosynthesis. In terms of biological role, exchanges the guanine residue with 7-cyano-7-deazaguanine (preQ0) at position 15 in the dihydrouridine loop (D-loop) of archaeal tRNAs. This Pyrococcus furiosus (strain ATCC 43587 / DSM 3638 / JCM 8422 / Vc1) protein is tRNA-guanine(15) transglycosylase.